We begin with the raw amino-acid sequence, 103 residues long: Large ribosomal subunit protein bL21 (103 aa).

It belongs to the bacterial ribosomal protein bL21 family. In terms of assembly, part of the 50S ribosomal subunit. Contacts protein L20.

Functionally, this protein binds to 23S rRNA in the presence of protein L20. In Shewanella piezotolerans (strain WP3 / JCM 13877), this protein is Large ribosomal subunit protein bL21.